Here is a 199-residue protein sequence, read N- to C-terminus: Urease accessory protein UreG (199 aa).

8–15 (GPVGSGKT) serves as a coordination point for GTP.

It belongs to the SIMIBI class G3E GTPase family. UreG subfamily. As to quaternary structure, homodimer. UreH, UreF and UreG form a complex that acts as a GTP-hydrolysis-dependent molecular chaperone, activating the urease apoprotein by helping to assemble the nickel containing metallocenter of UreC. The UreE protein probably delivers the nickel.

The protein localises to the cytoplasm. Its function is as follows. Facilitates the functional incorporation of the urease nickel metallocenter. This process requires GTP hydrolysis, probably effectuated by UreG. The protein is Urease accessory protein UreG of Helicobacter pylori (strain P12).